The chain runs to 402 residues: Sulfate adenylyltransferase (402 aa).

It belongs to the sulfate adenylyltransferase family.

The catalysed reaction is sulfate + ATP + H(+) = adenosine 5'-phosphosulfate + diphosphate. Its pathway is sulfur metabolism; hydrogen sulfide biosynthesis; sulfite from sulfate: step 1/3. The protein is Sulfate adenylyltransferase of Thiobacillus denitrificans (strain ATCC 25259 / T1).